Consider the following 473-residue polypeptide: Bifunctional protein HldE (473 aa).

The segment at Met-1 to Glu-318 is ribokinase. Asn-194–Glu-197 contributes to the ATP binding site. Asp-263 is a catalytic residue. The cytidylyltransferase stretch occupies residues Phe-343–His-473.

In the N-terminal section; belongs to the carbohydrate kinase PfkB family. The protein in the C-terminal section; belongs to the cytidylyltransferase family. Homodimer.

The catalysed reaction is D-glycero-beta-D-manno-heptose 7-phosphate + ATP = D-glycero-beta-D-manno-heptose 1,7-bisphosphate + ADP + H(+). It catalyses the reaction D-glycero-beta-D-manno-heptose 1-phosphate + ATP + H(+) = ADP-D-glycero-beta-D-manno-heptose + diphosphate. It functions in the pathway nucleotide-sugar biosynthesis; ADP-L-glycero-beta-D-manno-heptose biosynthesis; ADP-L-glycero-beta-D-manno-heptose from D-glycero-beta-D-manno-heptose 7-phosphate: step 1/4. It participates in nucleotide-sugar biosynthesis; ADP-L-glycero-beta-D-manno-heptose biosynthesis; ADP-L-glycero-beta-D-manno-heptose from D-glycero-beta-D-manno-heptose 7-phosphate: step 3/4. Its function is as follows. Catalyzes the phosphorylation of D-glycero-D-manno-heptose 7-phosphate at the C-1 position to selectively form D-glycero-beta-D-manno-heptose-1,7-bisphosphate. Functionally, catalyzes the ADP transfer from ATP to D-glycero-beta-D-manno-heptose 1-phosphate, yielding ADP-D-glycero-beta-D-manno-heptose. This Pseudomonas entomophila (strain L48) protein is Bifunctional protein HldE.